Reading from the N-terminus, the 416-residue chain is Gamma-glutamyl phosphate reductase (416 aa).

This sequence belongs to the gamma-glutamyl phosphate reductase family.

It localises to the cytoplasm. It carries out the reaction L-glutamate 5-semialdehyde + phosphate + NADP(+) = L-glutamyl 5-phosphate + NADPH + H(+). It functions in the pathway amino-acid biosynthesis; L-proline biosynthesis; L-glutamate 5-semialdehyde from L-glutamate: step 2/2. Functionally, catalyzes the NADPH-dependent reduction of L-glutamate 5-phosphate into L-glutamate 5-semialdehyde and phosphate. The product spontaneously undergoes cyclization to form 1-pyrroline-5-carboxylate. The polypeptide is Gamma-glutamyl phosphate reductase (Salmonella paratyphi A (strain AKU_12601)).